The sequence spans 193 residues: Small ribosomal subunit protein uS7 (193 aa).

This sequence belongs to the universal ribosomal protein uS7 family. Part of the 30S ribosomal subunit.

Functionally, one of the primary rRNA binding proteins, it binds directly to 16S rRNA where it nucleates assembly of the head domain of the 30S subunit. Is located at the subunit interface close to the decoding center. This chain is Small ribosomal subunit protein uS7, found in Saccharolobus solfataricus (strain ATCC 35092 / DSM 1617 / JCM 11322 / P2) (Sulfolobus solfataricus).